Reading from the N-terminus, the 101-residue chain is MIKSELIDQLAEANPHLYHRDVERVVNTILDGITDALARGERVELRGFGAFSVRHRPARVGRNPRTGESVAVKEKHVPFFKTGKELRERVDASRESNPEIA.

Belongs to the bacterial histone-like protein family. As to quaternary structure, heterodimer of an alpha and a beta chain.

Functionally, this protein is one of the two subunits of integration host factor, a specific DNA-binding protein that functions in genetic recombination as well as in transcriptional and translational control. The polypeptide is Integration host factor subunit beta (Maricaulis maris (strain MCS10) (Caulobacter maris)).